We begin with the raw amino-acid sequence, 605 residues long: Hepatocyte nuclear factor 1-alpha-A (605 aa).

Residues M1–A31 form a dimerization region. Positions M1–D32 constitute an HNF-p1 domain. The tract at residues Q57–P81 is disordered. A POU-specific atypical domain is found at K85 to F180. Interaction with DNA stretches follow at residues Q128–E130, H141–N147, K153–K156, R206–W209, R266–Y268, and N273–K276. The short motif at K200–K208 is the Nuclear localization signal element. A DNA-binding region (homeobox; HNF1-type) is located at residues M202–H282. A compositionally biased stretch (polar residues) spans D321–P335. Positions D321–S343 are disordered. Residues P448–H453 are not present in other members of the HNF1 family.

This sequence belongs to the HNF1 homeobox family. In terms of assembly, binds DNA as dimer. Forms a homodimer or heterodimer with HNF1-alpha-B. Potentially also form a heterodimer with HNF1-beta. In terms of tissue distribution, protein expressed in liver, stomach, small intestine, colon and kidney. Not expressed in spleen, lung, blood, heart muscle, skeletal muscle, testis and brain.

Its subcellular location is the nucleus. In terms of biological role, transcriptional activator that regulates the tissue specific expression of multiple genes, especially in pancreas and liver. Binds to the hepatocyte specific promoter element HP1. Binds to the inverted palindrome 5'-GTTAATNATTAAC-3'. This is Hepatocyte nuclear factor 1-alpha-A (hnf1a-a) from Xenopus laevis (African clawed frog).